Reading from the N-terminus, the 478-residue chain is Protein WVD2-like 7 (478 aa).

2 disordered regions span residues 201 to 326 and 385 to 420; these read DSAL…TGST and PMPS…SASI. Residues 208–217 show a composition bias toward basic and acidic residues; the sequence is AGSKLDEHAS. Composition is skewed to polar residues over residues 219–232 and 264–277; these read KPSN…SSVN and GSSL…NVDA. Residues 278–289 are compositionally biased toward basic and acidic residues; it reads KSQKELRPKKTI. 2 stretches are compositionally biased toward polar residues: residues 309 to 326 and 407 to 420; these read RCKT…TGST and VAQS…SASI.

This sequence belongs to the TPX2 family. Expressed in seedlings.

Its subcellular location is the cytoplasm. The protein localises to the cytoskeleton. In terms of biological role, microtubule-associated protein (MAP) that regulates the orientation of interphase cortical microtubules. The sequence is that of Protein WVD2-like 7 from Arabidopsis thaliana (Mouse-ear cress).